Consider the following 901-residue polypeptide: Protein translocase subunit SecA (901 aa).

Residues glutamine 87, 105–109, and aspartate 512 each bind ATP; that span reads GEGKT. Zn(2+) contacts are provided by cysteine 885, cysteine 887, cysteine 896, and histidine 897.

The protein belongs to the SecA family. In terms of assembly, monomer and homodimer. Part of the essential Sec protein translocation apparatus which comprises SecA, SecYEG and auxiliary proteins SecDF-YajC and YidC. Zn(2+) is required as a cofactor.

The protein resides in the cell inner membrane. It localises to the cytoplasm. The catalysed reaction is ATP + H2O + cellular proteinSide 1 = ADP + phosphate + cellular proteinSide 2.. Functionally, part of the Sec protein translocase complex. Interacts with the SecYEG preprotein conducting channel. Has a central role in coupling the hydrolysis of ATP to the transfer of proteins into and across the cell membrane, serving both as a receptor for the preprotein-SecB complex and as an ATP-driven molecular motor driving the stepwise translocation of polypeptide chains across the membrane. The chain is Protein translocase subunit SecA from Salmonella paratyphi A (strain ATCC 9150 / SARB42).